We begin with the raw amino-acid sequence, 365 residues long: tRNA N6-adenosine threonylcarbamoyltransferase (365 aa).

Fe cation is bound by residues H119 and H123. Substrate contacts are provided by residues 141-145 (LVSGG), D174, G187, and N288. D316 is a binding site for Fe cation.

The protein belongs to the KAE1 / TsaD family. Requires Fe(2+) as cofactor.

It localises to the cytoplasm. It catalyses the reaction L-threonylcarbamoyladenylate + adenosine(37) in tRNA = N(6)-L-threonylcarbamoyladenosine(37) in tRNA + AMP + H(+). Functionally, required for the formation of a threonylcarbamoyl group on adenosine at position 37 (t(6)A37) in tRNAs that read codons beginning with adenine. Is involved in the transfer of the threonylcarbamoyl moiety of threonylcarbamoyl-AMP (TC-AMP) to the N6 group of A37, together with TsaE and TsaB. TsaD likely plays a direct catalytic role in this reaction. The sequence is that of tRNA N6-adenosine threonylcarbamoyltransferase from Rhizobium leguminosarum bv. trifolii (strain WSM2304).